Reading from the N-terminus, the 634-residue chain is 1-deoxy-D-xylulose-5-phosphate synthase (634 aa).

Residues His74 and 115 to 117 contribute to the thiamine diphosphate site; that span reads AHS. Residue Asp146 participates in Mg(2+) binding. Residues 147-148, Asn176, Tyr283, and Glu365 contribute to the thiamine diphosphate site; that span reads GA. Asn176 is a Mg(2+) binding site.

Belongs to the transketolase family. DXPS subfamily. Homodimer. It depends on Mg(2+) as a cofactor. Thiamine diphosphate is required as a cofactor.

The catalysed reaction is D-glyceraldehyde 3-phosphate + pyruvate + H(+) = 1-deoxy-D-xylulose 5-phosphate + CO2. It participates in metabolic intermediate biosynthesis; 1-deoxy-D-xylulose 5-phosphate biosynthesis; 1-deoxy-D-xylulose 5-phosphate from D-glyceraldehyde 3-phosphate and pyruvate: step 1/1. Catalyzes the acyloin condensation reaction between C atoms 2 and 3 of pyruvate and glyceraldehyde 3-phosphate to yield 1-deoxy-D-xylulose-5-phosphate (DXP). The chain is 1-deoxy-D-xylulose-5-phosphate synthase from Burkholderia orbicola (strain MC0-3).